Reading from the N-terminus, the 218-residue chain is MHEDFWQARWARDEIGFHQAQVNPYLSRHWPTLGLAPGSRVLVPLCGKSLDLAWLAGQGFAVLGVELAEKAVRDFFDEQRLIPQVDSQGVFRVYRVGSLEIRCGDFFALSAADVADCRGLYDRAALIALPTEMRERYAAHLSAILPSGCRGLLVCLDYDQTRMGGPPFAVDDHEVRRLLGTDWQVRLLEAPDVLRENWKFLQRGLDRLEERVYRLERR.

4 residues coordinate S-adenosyl-L-methionine: Trp10, Leu45, Glu66, and Arg123.

It belongs to the class I-like SAM-binding methyltransferase superfamily. TPMT family.

The protein resides in the cytoplasm. The catalysed reaction is S-adenosyl-L-methionine + a thiopurine = S-adenosyl-L-homocysteine + a thiopurine S-methylether.. The protein is Thiopurine S-methyltransferase of Azotobacter vinelandii (strain DJ / ATCC BAA-1303).